We begin with the raw amino-acid sequence, 285 residues long: Shikimate dehydrogenase (NADP(+)) (285 aa).

Shikimate is bound by residues 19–21 (SLS) and Thr66. Lys70 serves as the catalytic Proton acceptor. Shikimate contacts are provided by Asn91 and Asp107. NADP(+) is bound by residues 129–133 (GSGGA) and Leu228. Residue Tyr230 participates in shikimate binding. Gly251 contacts NADP(+).

The protein belongs to the shikimate dehydrogenase family. As to quaternary structure, homodimer.

It carries out the reaction shikimate + NADP(+) = 3-dehydroshikimate + NADPH + H(+). It functions in the pathway metabolic intermediate biosynthesis; chorismate biosynthesis; chorismate from D-erythrose 4-phosphate and phosphoenolpyruvate: step 4/7. In terms of biological role, involved in the biosynthesis of the chorismate, which leads to the biosynthesis of aromatic amino acids. Catalyzes the reversible NADPH linked reduction of 3-dehydroshikimate (DHSA) to yield shikimate (SA). This Prochlorococcus marinus subsp. pastoris (strain CCMP1986 / NIES-2087 / MED4) protein is Shikimate dehydrogenase (NADP(+)).